The sequence spans 181 residues: Insulin-like growth factor 2 (181 aa).

The first 24 residues, Met-1 to Ala-24, serve as a signal peptide directing secretion. Residues Ala-25–Phe-52 are b. 3 disulfide bridges follow: Cys-33–Cys-71, Cys-45–Cys-84, and Cys-70–Cys-75. A c region spans residues Ser-53–Arg-64. The segment at Gly-65–Ala-85 is a. Residues Thr-86–Glu-91 form a d region. The propeptide at Arg-92–Gln-181 is e peptide. An O-linked (GalNAc...) threonine glycan is attached at Thr-163.

Belongs to the insulin family. Interacts with MYORG; this interaction is required for IGF2 secretion. Interacts with integrins ITGAV:ITGB3 and ITGA6:ITGB4; integrin-binding is required for IGF2 signaling. Interacts with IGFBP2. In terms of processing, proteolytically processed by PCSK4, proIGF2 is cleaved at Arg-128 and Arg-92 to generate big-IGF2 and mature IGF2.

The protein resides in the secreted. In terms of biological role, the insulin-like growth factors possess growth-promoting activity. Major fetal growth hormone in mammals. Plays a key role in regulating fetoplacental development. IGF2 is influenced by placental lactogen. Also involved in tissue differentiation. In adults, involved in glucose metabolism in adipose tissue, skeletal muscle and liver. Acts as a ligand for integrin which is required for IGF2 signaling. Positively regulates myogenic transcription factor MYOD1 function by facilitating the recruitment of transcriptional coactivators, thereby controlling muscle terminal differentiation. Inhibits myoblast differentiation and modulates metabolism via increasing the mitochondrial respiration rate. Preptin undergoes glucose-mediated co-secretion with insulin, and acts as a physiological amplifier of glucose-mediated insulin secretion. Exhibits osteogenic properties by increasing osteoblast mitogenic activity through phosphoactivation of MAPK1 and MAPK3. The protein is Insulin-like growth factor 2 of Equus caballus (Horse).